The following is a 724-amino-acid chain: Probable zinc transporter MSC2 (724 aa).

Residues methionine 1–leucine 6 lie on the Cytoplasmic side of the membrane. Residues leucine 7–valine 27 traverse the membrane as a helical segment. At proline 28 to alanine 58 the chain is on the lumenal side. Residues isoleucine 59–phenylalanine 79 traverse the membrane as a helical segment. The Cytoplasmic portion of the chain corresponds to asparagine 80–tyrosine 90. A helical transmembrane segment spans residues tyrosine 91 to glutamine 111. The Lumenal segment spans residues serine 112–alanine 134. The helical transmembrane segment at leucine 135–leucine 155 threads the bilayer. The Cytoplasmic portion of the chain corresponds to arginine 156–serine 174. A helical membrane pass occupies residues leucine 175 to threonine 195. Over leucine 196–arginine 219 the chain is Lumenal. A helical membrane pass occupies residues phenylalanine 220–valine 240. At asparagine 241–tyrosine 244 the chain is on the cytoplasmic side. The helical transmembrane segment at asparagine 245–leucine 265 threads the bilayer. Residues lysine 266 to tryptophan 298 are Lumenal-facing. A helical transmembrane segment spans residues leucine 299–phenylalanine 319. Residues asparagine 320–arginine 386 lie on the Cytoplasmic side of the membrane. A helical transmembrane segment spans residues serine 387–phenylalanine 407. The Lumenal segment spans residues arginine 408–aspartate 417. A helical transmembrane segment spans residues serine 418–threonine 438. Residues lysine 439–leucine 453 are Cytoplasmic-facing. A helical membrane pass occupies residues glycine 454–valine 474. Topologically, residues glutamate 475–glutamate 491 are lumenal. A helical transmembrane segment spans residues leucine 492–histidine 512. The Cytoplasmic segment spans residues glycine 513 to isoleucine 528. The chain crosses the membrane as a helical span at residues phenylalanine 529–isoleucine 549. The Lumenal portion of the chain corresponds to lysine 550–leucine 563. The helical transmembrane segment at leucine 564–isoleucine 584 threads the bilayer. The Cytoplasmic portion of the chain corresponds to leucine 585–asparagine 724. The disordered stretch occupies residues threonine 614–glutamate 653. Residues serine 634–lysine 648 are compositionally biased toward basic and acidic residues.

Belongs to the cation diffusion facilitator (CDF) transporter (TC 2.A.4) family. SLC30A subfamily.

The protein localises to the endoplasmic reticulum membrane. It localises to the nucleus membrane. Probably act as a zinc ion transporter moving zinc from the nucleus/endoplasmic reticulum to the cytoplasm. Involved in zinc ion homeostasis and cellular distribution. This Saccharomyces cerevisiae (strain ATCC 204508 / S288c) (Baker's yeast) protein is Probable zinc transporter MSC2 (MSC2).